The primary structure comprises 400 residues: 3-phenylpropionate/cinnamic acid dioxygenase ferredoxin--NAD(+) reductase component (400 aa).

5–36 (TIIIVGGGQAAAMAAASLRQQGFTGELHLFSD) serves as a coordination point for FAD. Residue 146-174 (SVVIIGAGTIGLELAASATQRRCKVTVIE) participates in NAD(+) binding.

This sequence belongs to the bacterial ring-hydroxylating dioxygenase ferredoxin reductase family. This dioxygenase system consists of four proteins: the two subunits of the hydroxylase component (HcaE and HcaF), a ferredoxin (HcaC) and a ferredoxin reductase (HcaD). Requires FAD as cofactor.

The enzyme catalyses 2 reduced [2Fe-2S]-[ferredoxin] + NAD(+) + H(+) = 2 oxidized [2Fe-2S]-[ferredoxin] + NADH. The protein operates within aromatic compound metabolism; 3-phenylpropanoate degradation. Functionally, part of the multicomponent 3-phenylpropionate dioxygenase, that converts 3-phenylpropionic acid (PP) and cinnamic acid (CI) into 3-phenylpropionate-dihydrodiol (PP-dihydrodiol) and cinnamic acid-dihydrodiol (CI-dihydrodiol), respectively. The polypeptide is 3-phenylpropionate/cinnamic acid dioxygenase ferredoxin--NAD(+) reductase component (Escherichia coli (strain K12 / MC4100 / BW2952)).